We begin with the raw amino-acid sequence, 276 residues long: NADPH-dependent 7-cyano-7-deazaguanine reductase (276 aa).

Residue 83–85 (IES) coordinates substrate. 85–86 (SK) is a binding site for NADPH. C184 acts as the Thioimide intermediate in catalysis. D191 serves as the catalytic Proton donor. 223–224 (HE) lines the substrate pocket. 252–253 (RG) provides a ligand contact to NADPH.

It belongs to the GTP cyclohydrolase I family. QueF type 2 subfamily. Homodimer.

Its subcellular location is the cytoplasm. It carries out the reaction 7-aminomethyl-7-carbaguanine + 2 NADP(+) = 7-cyano-7-deazaguanine + 2 NADPH + 3 H(+). The protein operates within tRNA modification; tRNA-queuosine biosynthesis. Catalyzes the NADPH-dependent reduction of 7-cyano-7-deazaguanine (preQ0) to 7-aminomethyl-7-deazaguanine (preQ1). This chain is NADPH-dependent 7-cyano-7-deazaguanine reductase, found in Pseudomonas paraeruginosa (strain DSM 24068 / PA7) (Pseudomonas aeruginosa (strain PA7)).